The primary structure comprises 684 residues: DNA ligase (684 aa).

NAD(+)-binding positions include 34–38, 83–84, and Glu117; these read DFQYD and SL. The active-site N6-AMP-lysine intermediate is Lys119. NAD(+)-binding residues include Arg140, Glu186, Lys300, and Lys324. Cys418, Cys421, Cys436, and Cys442 together coordinate Zn(2+). Residues 601-684 enclose the BRCT domain; it reads PVNLNFDGMK…EMLGEVGSNE (84 aa).

It belongs to the NAD-dependent DNA ligase family. LigA subfamily. Mg(2+) serves as cofactor. It depends on Mn(2+) as a cofactor.

It catalyses the reaction NAD(+) + (deoxyribonucleotide)n-3'-hydroxyl + 5'-phospho-(deoxyribonucleotide)m = (deoxyribonucleotide)n+m + AMP + beta-nicotinamide D-nucleotide.. In terms of biological role, DNA ligase that catalyzes the formation of phosphodiester linkages between 5'-phosphoryl and 3'-hydroxyl groups in double-stranded DNA using NAD as a coenzyme and as the energy source for the reaction. It is essential for DNA replication and repair of damaged DNA. This is DNA ligase from Chlorobium phaeobacteroides (strain BS1).